The primary structure comprises 160 residues: Large ribosomal subunit protein uL13 (160 aa).

It belongs to the universal ribosomal protein uL13 family. As to quaternary structure, part of the 50S ribosomal subunit.

This protein is one of the early assembly proteins of the 50S ribosomal subunit, although it is not seen to bind rRNA by itself. It is important during the early stages of 50S assembly. The chain is Large ribosomal subunit protein uL13 from Orientia tsutsugamushi (strain Ikeda) (Rickettsia tsutsugamushi).